The primary structure comprises 154 residues: MHIWVDADACPAVIKDILFRAAQRWQIPLTLVANQMLRTPPSALIRAVQVPRGFDVADAHIATHAVAGDLVITADIPLAADVLAKGALALNPRGERYSPDTIRERLSLRDMMEELRASGVDTGGPAAFSQADRKAFANQLDALLARQAAQASRP.

It belongs to the UPF0178 family.

This is UPF0178 protein BAV3236 from Bordetella avium (strain 197N).